Consider the following 705-residue polypeptide: DNA ligase (705 aa).

NAD(+) contacts are provided by residues 43–47 (DAEYD), 92–93 (SL), and Asp123. The active-site N6-AMP-lysine intermediate is Lys125. Residues Arg146, Glu184, Lys304, and Lys328 each coordinate NAD(+). Residues Cys422, Cys425, Cys440, and Cys445 each contribute to the Zn(2+) site. The BRCT domain occupies 607–696 (TPVTPLAGKK…EEISGQAADD (90 aa)). The interval 684 to 705 (SESEEISGQAADDYENSLLRVQ) is disordered.

Belongs to the NAD-dependent DNA ligase family. LigA subfamily. Requires Mg(2+) as cofactor. Mn(2+) is required as a cofactor.

The enzyme catalyses NAD(+) + (deoxyribonucleotide)n-3'-hydroxyl + 5'-phospho-(deoxyribonucleotide)m = (deoxyribonucleotide)n+m + AMP + beta-nicotinamide D-nucleotide.. In terms of biological role, DNA ligase that catalyzes the formation of phosphodiester linkages between 5'-phosphoryl and 3'-hydroxyl groups in double-stranded DNA using NAD as a coenzyme and as the energy source for the reaction. It is essential for DNA replication and repair of damaged DNA. This chain is DNA ligase, found in Oleidesulfovibrio alaskensis (strain ATCC BAA-1058 / DSM 17464 / G20) (Desulfovibrio alaskensis).